The primary structure comprises 715 residues: DNA ligase (715 aa).

NAD(+) contacts are provided by residues Asp-47–Asp-51, Ser-96–Leu-97, and Glu-128. The active-site N6-AMP-lysine intermediate is the Lys-130. Residues Arg-151, Glu-188, Lys-306, and Lys-330 each contribute to the NAD(+) site. Zn(2+) is bound by residues Cys-435, Cys-438, Cys-453, and Cys-459. The BRCT domain maps to Arg-637 to Asn-715.

The protein belongs to the NAD-dependent DNA ligase family. LigA subfamily. It depends on Mg(2+) as a cofactor. The cofactor is Mn(2+).

It catalyses the reaction NAD(+) + (deoxyribonucleotide)n-3'-hydroxyl + 5'-phospho-(deoxyribonucleotide)m = (deoxyribonucleotide)n+m + AMP + beta-nicotinamide D-nucleotide.. DNA ligase that catalyzes the formation of phosphodiester linkages between 5'-phosphoryl and 3'-hydroxyl groups in double-stranded DNA using NAD as a coenzyme and as the energy source for the reaction. It is essential for DNA replication and repair of damaged DNA. The protein is DNA ligase of Rhodopseudomonas palustris (strain ATCC BAA-98 / CGA009).